The sequence spans 196 residues: Cilia- and flagella-associated protein 107 (196 aa).

Mn stretches follow at residues 47 to 62 (TPQC…MPDH) and 97 to 109 (ISTY…RHNY).

In terms of assembly, microtubule inner protein component of sperm flagellar doublet microtubules.

Its subcellular location is the cytoplasm. The protein resides in the cytoskeleton. It is found in the cilium axoneme. It localises to the flagellum axoneme. Microtubule inner protein (MIP) part of the dynein-decorated doublet microtubules (DMTs) in cilia axoneme, which is required for motile cilia beating. This chain is Cilia- and flagella-associated protein 107, found in Mus musculus (Mouse).